The chain runs to 226 residues: Xanthocillin biosynthesis cluster protein F (226 aa).

It functions in the pathway secondary metabolite biosynthesis. Its function is as follows. Part of the gene cluster that mediates the biosynthesis of the isocyanide xanthocillin and its derivatives. The first step of the pathway consists in the conversion of tyrosine into a vinyl-isonitrile intermediate by the isocyanide synthase xanB. Subsequent oxidative dimerization of this intermediate to form xanthocillin may involve the cytochrome P450 monooxygenase xanG, whose expression is coregulated with that of XanB. Xanthocillin can be further modified by the isonitrile hydratase-like protein xanA which introduces N-formyl groups and the methyltransferase xanE which introduces methyl groups, leading to the production of several derivatives including fumiformamide. Finally, fumiformamide can be subject to both oxidative and reductive cyclization to yield melanocins E and F, respectively. The polypeptide is Xanthocillin biosynthesis cluster protein F (Aspergillus fumigatus (strain ATCC MYA-4609 / CBS 101355 / FGSC A1100 / Af293) (Neosartorya fumigata)).